A 692-amino-acid chain; its full sequence is E3 ubiquitin-protein ligase MARCHF7 (692 aa).

M1 carries the N-acetylmethionine modification. 6 disordered regions span residues 1 to 165, 201 to 280, 296 to 343, 360 to 425, 440 to 474, and 512 to 532; these read MESK…SHRS, STNH…GRRT, FFSR…RASE, LSQN…HLFR, SLGA…RNTG, and SSAD…PEKL. Basic and acidic residues predominate over residues 37-48; the sequence is YHSRDSSFRLDS. Polar residues-rich tracts occupy residues 61 to 83 and 95 to 132; these read PYQS…SQNQ and SCTN…SSMV. Basic and acidic residues predominate over residues 140-153; it reads LMRERRDLERRRDS. Over residues 201–214 the composition is skewed to polar residues; the sequence is STNHQLPSEHQTVP. Low complexity predominate over residues 215–233; sequence SSRDSSRSSFRSHFSPRQS. The segment covering 235 to 272 has biased composition (polar residues); sequence SFRNSSHPAFSYLSSRNETPTISSSERAGSSQRPFQES. Residues 296 to 305 are compositionally biased toward low complexity; it reads FFSRRSSQDS. Polar residues predominate over residues 306 to 336; sequence LNTRSLSSENYISPRTLTSQSRNNGASSSEV. 2 positions are modified to phosphoserine: S318 and S389. The span at 450-462 shows a compositional bias: low complexity; the sequence is ASGASGNASASGS. Basic and acidic residues predominate over residues 516-532; that stretch reads GKSEKAKSAPSRDPEKL. Residues 545–615 form an RING-CH-type zinc finger; sequence DEEEEGDLCR…ELCKEKLQLN (71 aa). The Zn(2+) site is built by C553, C556, C571, C573, H581, C584, C605, and C608. T687 carries the phosphothreonine modification. At S688 the chain carries Phosphoserine.

The protein resides in the cytoplasm. The catalysed reaction is S-ubiquitinyl-[E2 ubiquitin-conjugating enzyme]-L-cysteine + [acceptor protein]-L-lysine = [E2 ubiquitin-conjugating enzyme]-L-cysteine + N(6)-ubiquitinyl-[acceptor protein]-L-lysine.. Its pathway is protein modification; protein ubiquitination. Its function is as follows. E3 ubiquitin-protein ligase which may specifically enhance the E2 activity of HIP2. E3 ubiquitin ligases accept ubiquitin from an E2 ubiquitin-conjugating enzyme in the form of a thioester and then directly transfer the ubiquitin to targeted substrates. May be involved in T-cell proliferation by regulating LIF secretion. May play a role in lysosome homeostasis. Promotes 'Lys-6', 'Lys-11' and 'Lys-63'-linked mixed polyubiquitination on ATG14 leading to the inhibition of autophagy by impairing the interaction between ATG14 and STX7. Participates in the dopamine-mediated negative regulation of the NLRP3 inflammasome by promoting its uibiquitination and subsequent degradation. The polypeptide is E3 ubiquitin-protein ligase MARCHF7 (Marchf7) (Rattus norvegicus (Rat)).